We begin with the raw amino-acid sequence, 395 residues long: MHC class I-like protein MILL1 (395 aa).

Residues 1–32 form the signal peptide; it reads MLLSRNLRALAAIHLWIVYLLLEDLLGTCAEG. The interval 57 to 148 is alpha-1; the sequence is AVAEPHTLRY…ITAQNGQNTD (92 aa). Asn98, Asn163, and Asn199 each carry an N-linked (GlcNAc...) asparagine glycan. An alpha-2 region spans residues 149–240; the sequence is LHILQATFGC…SLRNGLLNTG (92 aa). Disulfide bonds link Cys158–Cys221 and Cys260–Cys317. The segment at 241–337 is alpha-3; sequence FPKVIVTFRN…EPAATEAPVY (97 aa). The Ig-like C1-type domain maps to 242-333; sequence PKVIVTFRNY…HNINEPAATE (92 aa). The tract at residues 332–352 is disordered; the sequence is TEAPVYGARREQPPTSGVGSR. Residues 338–368 form a connecting peptide region; sequence GARREQPPTSGVGSRVGKSLWSAMTTALVVI. Ser369 carries GPI-anchor amidated serine lipidation. Residues 370 to 395 constitute a propeptide, removed in mature form; the sequence is WTLSQKLMGPLLWFCSGGFCSFLQCW.

Belongs to the MHC class I family. In terms of assembly, heterodimer with B2M. Post-translationally, N-glycosylated. In terms of tissue distribution, expressed in stomach, intestine, uterus, skeletal muscle and heart.

The protein resides in the cell membrane. This Mus musculus (Mouse) protein is MHC class I-like protein MILL1.